The sequence spans 470 residues: BTB/POZ domain-containing protein 17 (470 aa).

An N-terminal signal peptide occupies residues Met-1–Ser-18. Positions Ser-53–Leu-122 constitute a BTB domain. One can recognise a BACK domain in the interval Val-161–Gln-261.

Its subcellular location is the secreted. This Xenopus laevis (African clawed frog) protein is BTB/POZ domain-containing protein 17 (btbd17).